Here is a 99-residue protein sequence, read N- to C-terminus: Large ribosomal subunit protein uL23 (99 aa).

It belongs to the universal ribosomal protein uL23 family. As to quaternary structure, part of the 50S ribosomal subunit. Contacts protein L29, and trigger factor when it is bound to the ribosome.

Its function is as follows. One of the early assembly proteins it binds 23S rRNA. One of the proteins that surrounds the polypeptide exit tunnel on the outside of the ribosome. Forms the main docking site for trigger factor binding to the ribosome. This chain is Large ribosomal subunit protein uL23, found in Leifsonia xyli subsp. xyli (strain CTCB07).